The following is a 240-amino-acid chain: Late expression factor 5 homolog (240 aa).

It belongs to the baculoviridae LEF-5 family.

In terms of biological role, required for late and very late gene expression. The polypeptide is Late expression factor 5 homolog (Tortricidae (ClGV)).